A 177-amino-acid chain; its full sequence is uncharacterized protein (177 aa).

Positions 100–115 (QVQPHQQTHQQSQQTH) are enriched in low complexity. The segment at 100–135 (QVQPHQQTHQQSQQTHNKTVANSGDPPPPPPSQPNK) is disordered. The chain crosses the membrane as a helical span at residues 141-158 (WIVGMVIGVVVLYLLYRY).

It is found in the membrane. This is an uncharacterized protein from Aedes vexans (Inland floodwater mosquito).